Here is a 256-residue protein sequence, read N- to C-terminus: MEKKMIPAERQKTLLNLISKQSVISINNLVNILGVSHMTVRRDIQKLEEDGKVISVSGGVQLLERLSSEPTHDDKSLLATTEKTAISKKAVELIQEHSTIYLDAGTTTLEIAKQIANRNDLLVITNDFVIAHYLMVNSQCNIMHTGGLINKSNRSSVGEFAAQFLHQISVDIAFISTSSWNLKGLTTPDEQKIPVKKAIIQFSQKNILVTDSSKYGKVATFLLYPLSSLDTIICDKGLPENAQARIAEMNVELFLV.

The HTH deoR-type domain occupies 7 to 62 (PAERQKTLLNLISKQSVISINNLVNILGVSHMTVRRDIQKLEEDGKVISVSGGVQL). The H-T-H motif DNA-binding region spans 24-43 (ISINNLVNILGVSHMTVRRD).

This is an uncharacterized protein from Haemophilus influenzae (strain ATCC 51907 / DSM 11121 / KW20 / Rd).